A 474-amino-acid polypeptide reads, in one-letter code: NADH-ubiquinone oxidoreductase chain 4 (474 aa).

Transmembrane regions (helical) follow at residues 34–54 (SFFLMLVLALFCALFTFDLMF), 86–106 (LYGLILVFLCLLTGFVAISTV), 115–135 (LKFYLIFFQFFLAVLGFIKCS), 137–157 (LIAFFFFYEVLMLGSVLVVFF), 167–187 (AVIYFVAWTQLGSLFVLLACL), 211–231 (AMTIYSLLFVGFGIKFPIWPL), 242–262 (ASTGFSIYLSGFLVKTALFGF), 276–295 (TFFLAVLVAGVIDSSLNMWS), 302–322 (LVAYCTIQEMNLIAIFFLKGD), 325–345 (LIAYGFLFTIMHALMSTLMFF), 373–393 (ALAIIFMVLFFSGILGTLKFV), 405–425 (VSWPIGVIFVVVVSAIGLIGF), and 454–474 (YIIFLCFAGLIFLTFLPFLMI).

Belongs to the complex I subunit 4 family.

Its subcellular location is the mitochondrion membrane. It carries out the reaction a ubiquinone + NADH + 5 H(+)(in) = a ubiquinol + NAD(+) + 4 H(+)(out). Core subunit of the mitochondrial membrane respiratory chain NADH dehydrogenase (Complex I) that is believed to belong to the minimal assembly required for catalysis. Complex I functions in the transfer of electrons from NADH to the respiratory chain. The immediate electron acceptor for the enzyme is believed to be ubiquinone. This chain is NADH-ubiquinone oxidoreductase chain 4 (ND4), found in Paramecium tetraurelia.